A 763-amino-acid polypeptide reads, in one-letter code: ATP-dependent RNA helicase SUV3 homolog, mitochondrial (763 aa).

A mitochondrion-targeting transit peptide spans 1 to 43 (MQNCRRCISLTGLLRMTLYLRPSFSIDLSLRRLHRAAFLFSRK). The region spanning 181-321 (NARAITRKIV…ALDLLQKICE (141 aa)) is the Helicase ATP-binding domain. An ATP-binding site is contributed by 194 to 201 (GPTNSGKT). The region spanning 330–508 (RLYDRLTELT…PTADQIELYA (179 aa)) is the Helicase C-terminal domain. Residues 724–763 (AQQLGKSNSQSNENSEPVVNSDDEDNYSGIGRKTRKKRRK) form a disordered region. Residues 727–741 (LGKSNSQSNENSEPV) show a composition bias toward polar residues.

Belongs to the helicase family. Mg(2+) is required as a cofactor. It depends on Mn(2+) as a cofactor.

It localises to the mitochondrion. The catalysed reaction is ATP + H2O = ADP + phosphate + H(+). Major helicase player in mitochondrial RNA metabolism and maintenance. Likely component of the mitochondrial degradosome (mtEXO) complex, that degrades 3' overhang double-stranded RNA with a 3'-to-5' directionality in an ATP-dependent manner. ATPase and ATP-dependent multisubstrate helicase, able to unwind double-stranded (ds) DNA and RNA, and RNA/DNA heteroduplexes in the 5'-to-3' direction. Regulates mRNA stability and is required for the correct processing and maturation of mitochondrial transcripts. The polypeptide is ATP-dependent RNA helicase SUV3 homolog, mitochondrial (Drosophila melanogaster (Fruit fly)).